We begin with the raw amino-acid sequence, 321 residues long: Transmembrane protein fend (321 aa).

Positions Met1–Ala18 are cleaved as a signal peptide. Residues Gln19 to Gly261 are Extracellular-facing. Residues Val262 to Phe282 traverse the membrane as a helical segment. The Cytoplasmic segment spans residues Leu283–Val321.

Its subcellular location is the membrane. In terms of biological role, involved in the normal targeting of ventral muscle, muscle 12, by motoneurons. May function as an axon guidance molecule involved in neuromuscular specificity. This chain is Transmembrane protein fend (fend), found in Drosophila melanogaster (Fruit fly).